Reading from the N-terminus, the 547-residue chain is Sesquiterpene synthase TPS3 (547 aa).

The (2E,6E)-farnesyl diphosphate site is built by Arg265, Asp302, Asp306, Arg443, and Asp446. Residues Asp302 and Asp306 each contribute to the Mg(2+) site. A DDXXD motif motif is present at residues 302-306; it reads DDIYD. 3 residues coordinate Mg(2+): Asp446, Thr450, and Glu454.

The protein belongs to the terpene synthase family. Tpsb subfamily. Monomer. Mg(2+) is required as a cofactor.

The protein resides in the cytoplasm. It carries out the reaction (2E,6E)-farnesyl diphosphate = (1S,5S,6R)-alpha-bergamotene + diphosphate. It participates in secondary metabolite biosynthesis; terpenoid biosynthesis. Sesquiterpene synthase involved in the biosynthesis of volatile organic compounds. Mediates the conversion of (2E,6E)-farnesyl diphosphate (FPP) into alpha-bergamotene. Does not use (2E)-geranyl diphosphate (GPP) as substrate. The polypeptide is Sesquiterpene synthase TPS3 (Cananga odorata (Ylang-ylang tree)).